Reading from the N-terminus, the 88-residue chain is MANSKSAKKRALQSEKRRQHNASRRSMLRTYVKKVIAAIKAGDHKTATEAFAAAQPIVDRMATKGLIHKNKAARHKARLNAKIKALAA.

The tract at residues Met1 to Met27 is disordered.

Belongs to the bacterial ribosomal protein bS20 family.

In terms of biological role, binds directly to 16S ribosomal RNA. This chain is Small ribosomal subunit protein bS20, found in Shewanella sp. (strain ANA-3).